We begin with the raw amino-acid sequence, 131 residues long: UPF0146 protein PYRAB01940 (131 aa).

The protein belongs to the UPF0146 family.

This Pyrococcus abyssi (strain GE5 / Orsay) protein is UPF0146 protein PYRAB01940.